Consider the following 112-residue polypeptide: Putative acyl carrier protein, mitochondrial (112 aa).

The transit peptide at 1–28 directs the protein to the mitochondrion; that stretch reads MLSRFSSQLRFISAVRPVIPKFQPLRFY. Residues 33-109 enclose the Carrier domain; that stretch reads PDAEKRILKV…DAISYITKNP (77 aa). At S69 the chain carries O-(pantetheine 4'-phosphoryl)serine.

Belongs to the acyl carrier protein (ACP) family. In terms of processing, 4'-phosphopantetheine is transferred from CoA to a specific serine of apo-ACP by acpS. This modification is essential for activity because fatty acids are bound in thioester linkage to the sulfhydryl of the prosthetic group.

The protein localises to the mitochondrion. It participates in lipid metabolism; fatty acid biosynthesis. Carrier of the growing fatty acid chain in fatty acid biosynthesis. May be involved in the synthesis of very-long-chain fatty acids. This is Putative acyl carrier protein, mitochondrial from Schizosaccharomyces pombe (strain 972 / ATCC 24843) (Fission yeast).